The sequence spans 927 residues: MAPAPGMAPYSDEPTGPFHRPEHNDESTGRMSHESESSVSTTSIVFDRIEERLAAKEGHFELDDHDPMKEADDDDNDLETGRFLGGRSSTQEEDFPAKNDGMNRGMRRTLIIVAGLLISAWVVGLFFYVSHKSYKPASQIEHDPQATVVQGTGKQVTLDQVMGSYWRAESHSISWIESPDGEDGLLLLKDGPGKDFLVVEDVRTQNSAGVNAAVDVASSRTLIKERHFDFGGQTHTPGRVWPSKDLKKVLIATNLEANWRHSFYASYWVFDVDMQIAEPLIPGEPNVRVQLAQWSPTSDAIAYVRDNNLFLRSLKHDKVVQITKDGGAEVFNGVPDWVYEEEVFSGNSATWWSEDGNYIAYLRTNETGVPEYPVQYFLSRPSGTEPAPGEESYPEVRQIKYPKAGAHNPVVNLKFYDVARDESFTVEISGRFADDDRLITEVVWAGGQVIVKETNRVSDVLRVVLVDVAARTGKAVRELDVKAIDGGWFEITHKTKYIPADPSKGREQDGYIDMVIHDDNDHLAYFTPLNNSEPIMLTSGHWEVVDAPSTVDLDNNIVYFVATKESSIQRHVYQVDLSGNNLKAVTDTGSEGYYDISFSAGTGYALLSYRGPNIPWQKVISTPANAHKYEHMVEENKELAKSAREYELPIKIYGTIKVDGVELNYVERRPPHFDKNKKYPVLFQQYSGPGSQSVNKRFTVDYQSYVAAGLGYVCVTVDGRGTGFIGRKNRVIIRGDLGKWEAHDQIAAAKIWASKSYVDEERLAIWGWSFGGFNTLKTLEQDGGRTFKYGMAVAPVTDWRFYDSIYTERYMLTPQTNGHGYDTSAINNVTALKQSVRFLMMHGVADDNVHMQNSLTLLDKLNMVGVENYDVHVFPDSDHGIYFHNANRIVYDKLTNWLINAFNGEWIKVANAKPQKKRSIQPILPIL.

Disordered regions lie at residues 1–44 (MAPA…TTSI) and 58–101 (GHFE…KNDG). Residues 1 to 108 (MAPAPGMAPY…NDGMNRGMRR (108 aa)) are Cytoplasmic-facing. Composition is skewed to basic and acidic residues over residues 19 to 36 (HRPEHNDESTGRMSHESE) and 58 to 70 (GHFELDDHDPMKE). The chain crosses the membrane as a helical; Signal-anchor for type II membrane protein span at residues 109-129 (TLIIVAGLLISAWVVGLFFYV). Residues 130–927 (SHKSYKPASQ…RSIQPILPIL (798 aa)) lie on the Vacuolar side of the membrane. Residues asparagine 365 and asparagine 530 are each glycosylated (N-linked (GlcNAc...) asparagine). Serine 769 (charge relay system) is an active-site residue. A glycan (N-linked (GlcNAc...) asparagine) is linked at asparagine 828. Active-site charge relay system residues include aspartate 846 and histidine 879.

It belongs to the peptidase S9B family.

The protein localises to the vacuole membrane. The catalysed reaction is Release of an N-terminal dipeptide, Xaa-Yaa-|-Zaa-, from a polypeptide, preferentially when Yaa is Pro, provided Zaa is neither Pro nor hydroxyproline.. In terms of biological role, type IV dipeptidyl-peptidase which removes N-terminal dipeptides sequentially from polypeptides having unsubstituted N-termini provided that the penultimate residue is proline. In Podospora anserina (strain S / ATCC MYA-4624 / DSM 980 / FGSC 10383) (Pleurage anserina), this protein is Probable dipeptidyl-aminopeptidase B (DAPB).